A 98-amino-acid chain; its full sequence is MTPIQFTFSSAFLLGLSGLAFHRTHLLSALLCLEGMMLSLFIALSLWSLQLSSISFSSAPMLLLAFSACEASVGLALMVATARTHGSDHLQGLNLLQC.

The next 3 membrane-spanning stretches (helical) occupy residues 1–21 (MTPIQFTFSSAFLLGLSGLAF), 26–46 (LLSALLCLEGMMLSLFIALSL), and 59–79 (APMLLLAFSACEASVGLALMV).

The protein belongs to the complex I subunit 4L family.

It is found in the mitochondrion membrane. It carries out the reaction a ubiquinone + NADH + 5 H(+)(in) = a ubiquinol + NAD(+) + 4 H(+)(out). Its function is as follows. Core subunit of the mitochondrial membrane respiratory chain NADH dehydrogenase (Complex I) which catalyzes electron transfer from NADH through the respiratory chain, using ubiquinone as an electron acceptor. Part of the enzyme membrane arm which is embedded in the lipid bilayer and involved in proton translocation. The protein is NADH-ubiquinone oxidoreductase chain 4L (MT-ND4L) of Tetraodon nigroviridis (Spotted green pufferfish).